The following is a 249-amino-acid chain: Caffeoyl-CoA O-methyltransferase 1 (249 aa).

K23 serves as a coordination point for substrate. S-adenosyl-L-methionine is bound by residues T65, E87, 89 to 90 (GV), S95, D113, and A142. D165 provides a ligand contact to substrate. Residue D165 participates in a divalent metal cation binding. D167 contributes to the S-adenosyl-L-methionine binding site. D191 and N192 together coordinate a divalent metal cation. N196 lines the substrate pocket.

Belongs to the class I-like SAM-binding methyltransferase superfamily. Cation-dependent O-methyltransferase family. CCoAMT subfamily. The cofactor is a divalent metal cation. In terms of tissue distribution, mostly expressed in petal limbs and tubes, and, at low levels, in flower buds, stamens, pistils, stems, roots and leaves.

It localises to the cytoplasm. The protein localises to the cytosol. It catalyses the reaction (E)-caffeoyl-CoA + S-adenosyl-L-methionine = (E)-feruloyl-CoA + S-adenosyl-L-homocysteine + H(+). It carries out the reaction (E)-5-hydroxyferuloyl-CoA + S-adenosyl-L-methionine = (E)-sinapoyl-CoA + S-adenosyl-L-homocysteine + H(+). The protein operates within aromatic compound metabolism; phenylpropanoid biosynthesis. Its function is as follows. Involved in the production of floral volatile phenylpropanoids in flowers of fragrant cultivars (e.g. cv. Mitchell and cv. V26) from cinnamic acid, a common precursor with the anthocyanin biosynthesis pathway involved in flower pigmentation. Methylates caffeoyl-CoA to feruloyl-CoA, also able to methylate 5-hydroxyferuloyl-CoA. The chain is Caffeoyl-CoA O-methyltransferase 1 from Petunia hybrida (Petunia).